A 298-amino-acid chain; its full sequence is DDRGK domain-containing protein 1 (298 aa).

Residues 1–2 (ME) lie on the Lumenal side of the membrane. A helical transmembrane segment spans residues 3-23 (EIFALIVSMILIVAVIPLFFW). Residues 24-298 (KRRRDARSRE…ISGMEEISVS (275 aa)) lie on the Cytoplasmic side of the membrane. The disordered stretch occupies residues 31-155 (SREEVAEPPQ…EEEKARQAKE (125 aa)). Positions 101 to 155 (KRQEREAQRQAEEATRESRNTKQDWYAEMRRKKDEEREAEELKLEEEEKARQAKE) are enriched in basic and acidic residues.

Belongs to the DDRGK1 family.

It is found in the endoplasmic reticulum membrane. In terms of biological role, substrate adapter for ufmylation, the covalent attachment of the ubiquitin-like modifier UFM1 to substrate proteins. The sequence is that of DDRGK domain-containing protein 1 from Arabidopsis thaliana (Mouse-ear cress).